We begin with the raw amino-acid sequence, 416 residues long: Tyrosine--tRNA ligase (416 aa).

Position 39 (tyrosine 39) interacts with L-tyrosine. Positions 44–53 (CTASSLHVGS) match the 'HIGH' region motif. L-tyrosine contacts are provided by tyrosine 176 and glutamine 180. Positions 236–240 (KMGKT) match the 'KMSKS' region motif. Residue lysine 239 participates in ATP binding. The S4 RNA-binding domain maps to 349–415 (ISLIDLLHDI…GKKRHIKVMV (67 aa)).

Belongs to the class-I aminoacyl-tRNA synthetase family. TyrS type 1 subfamily. As to quaternary structure, homodimer.

It is found in the cytoplasm. It catalyses the reaction tRNA(Tyr) + L-tyrosine + ATP = L-tyrosyl-tRNA(Tyr) + AMP + diphosphate + H(+). Its function is as follows. Catalyzes the attachment of tyrosine to tRNA(Tyr) in a two-step reaction: tyrosine is first activated by ATP to form Tyr-AMP and then transferred to the acceptor end of tRNA(Tyr). This Wolbachia sp. subsp. Brugia malayi (strain TRS) protein is Tyrosine--tRNA ligase.